The chain runs to 391 residues: Elongation factor Tu (391 aa).

Positions 10–201 constitute a tr-type G domain; sequence KPHVNIGTIG…EVDNYIPTPE (192 aa). Positions 19–26 are G1; sequence GHVDHGKT. A GTP-binding site is contributed by 19–26; sequence GHVDHGKT. Thr-26 is a binding site for Mg(2+). Residues 55–59 form a G2 region; that stretch reads GITIS. Positions 76–79 are G3; that stretch reads DCPG. GTP is bound by residues 76–80 and 131–134; these read DCPGH and NKVD. The interval 131–134 is G4; it reads NKVD. The segment at 169–171 is G5; sequence SAL.

This sequence belongs to the TRAFAC class translation factor GTPase superfamily. Classic translation factor GTPase family. EF-Tu/EF-1A subfamily. As to quaternary structure, monomer.

Its subcellular location is the cytoplasm. The catalysed reaction is GTP + H2O = GDP + phosphate + H(+). GTP hydrolase that promotes the GTP-dependent binding of aminoacyl-tRNA to the A-site of ribosomes during protein biosynthesis. In Bartonella henselae (strain ATCC 49882 / DSM 28221 / CCUG 30454 / Houston 1) (Rochalimaea henselae), this protein is Elongation factor Tu.